The primary structure comprises 214 residues: DNA-directed RNA polymerase subunit alpha (214 aa).

The protein belongs to the RNA polymerase alpha chain family. In terms of assembly, in plastids the minimal PEP RNA polymerase catalytic core is composed of four subunits: alpha, beta, beta', and beta''. When a (nuclear-encoded) sigma factor is associated with the core the holoenzyme is formed, which can initiate transcription.

The protein localises to the plastid. Its subcellular location is the chloroplast. The enzyme catalyses RNA(n) + a ribonucleoside 5'-triphosphate = RNA(n+1) + diphosphate. In terms of biological role, DNA-dependent RNA polymerase catalyzes the transcription of DNA into RNA using the four ribonucleoside triphosphates as substrates. This is DNA-directed RNA polymerase subunit alpha (rpoA) from Euglena viridis (Cercaria viridis).